A 266-amino-acid chain; its full sequence is tRNA (guanine-N(7)-)-methyltransferase (266 aa).

The disordered stretch occupies residues 1–32 (MSDHGRMHIPESGLATPAAAHSDDPPHPHFNR). S-adenosyl-L-methionine-binding residues include Glu96, Glu121, Asp148, and Asp171. The active site involves Asp171. Substrate is bound by residues Lys175 and Asp207.

It belongs to the class I-like SAM-binding methyltransferase superfamily. TrmB family.

It catalyses the reaction guanosine(46) in tRNA + S-adenosyl-L-methionine = N(7)-methylguanosine(46) in tRNA + S-adenosyl-L-homocysteine. It participates in tRNA modification; N(7)-methylguanine-tRNA biosynthesis. Functionally, catalyzes the formation of N(7)-methylguanine at position 46 (m7G46) in tRNA. This Mycolicibacterium vanbaalenii (strain DSM 7251 / JCM 13017 / BCRC 16820 / KCTC 9966 / NRRL B-24157 / PYR-1) (Mycobacterium vanbaalenii) protein is tRNA (guanine-N(7)-)-methyltransferase.